We begin with the raw amino-acid sequence, 296 residues long: Fructose-bisphosphate aldolase class 1 (296 aa).

The active-site Proton acceptor is the glutamate 175. The Schiff-base intermediate with dihydroxyacetone-P role is filled by lysine 212.

The protein belongs to the class I fructose-bisphosphate aldolase family.

It catalyses the reaction beta-D-fructose 1,6-bisphosphate = D-glyceraldehyde 3-phosphate + dihydroxyacetone phosphate. Its pathway is carbohydrate degradation; glycolysis; D-glyceraldehyde 3-phosphate and glycerone phosphate from D-glucose: step 4/4. The sequence is that of Fructose-bisphosphate aldolase class 1 from Staphylococcus aureus (strain Mu3 / ATCC 700698).